A 189-amino-acid chain; its full sequence is Large ribosomal subunit protein bL9 (189 aa).

It belongs to the bacterial ribosomal protein bL9 family.

Its function is as follows. Binds to the 23S rRNA. The protein is Large ribosomal subunit protein bL9 of Methylobacterium nodulans (strain LMG 21967 / CNCM I-2342 / ORS 2060).